Here is a 365-residue protein sequence, read N- to C-terminus: uncharacterized protein (365 aa).

6 consecutive transmembrane segments (helical) span residues 3–23, 60–80, 100–120, 141–161, 171–191, and 280–300; these read MDTS…LYSI, IGII…LNII, VFLF…LIAI, SGIL…GDEF, AIAS…IPLL, and TALF…LALF.

It to S.solfataricus C04034.

It is found in the cell membrane. This is an uncharacterized protein from Methanocaldococcus jannaschii (strain ATCC 43067 / DSM 2661 / JAL-1 / JCM 10045 / NBRC 100440) (Methanococcus jannaschii).